The primary structure comprises 198 residues: Nucleoid occlusion factor SlmA (198 aa).

The 62-residue stretch at 9 to 70 (RNRREEILQA…SLIEFIEDSL (62 aa)) folds into the HTH tetR-type domain. Residues 33–52 (TTAKLAANVGVSEAALYRHF) constitute a DNA-binding region (H-T-H motif). The stretch at 117–144 (EQDRLQGRINQLFERIEAQLRQVLKERK) forms a coiled coil.

Belongs to the nucleoid occlusion factor SlmA family. Homodimer. Interacts with FtsZ.

The protein resides in the cytoplasm. Its subcellular location is the nucleoid. Functionally, required for nucleoid occlusion (NO) phenomenon, which prevents Z-ring formation and cell division over the nucleoid. Acts as a DNA-associated cell division inhibitor that binds simultaneously chromosomal DNA and FtsZ, and disrupts the assembly of FtsZ polymers. SlmA-DNA-binding sequences (SBS) are dispersed on non-Ter regions of the chromosome, preventing FtsZ polymerization at these regions. The protein is Nucleoid occlusion factor SlmA of Serratia proteamaculans (strain 568).